The chain runs to 518 residues: Phytoene desaturase (neurosporene-forming) (518 aa).

14–47 is a binding site for FAD; the sequence is LVIGSGLGGLAAAMRLGAKGWRVTVIDKLDVPGG.

Belongs to the carotenoid/retinoid oxidoreductase family. It depends on FAD as a cofactor.

The catalysed reaction is 15-cis-phytoene + 3 A = all-trans-neurosporene + 3 AH2. Its pathway is carotenoid biosynthesis. Functionally, converts phytoene into all-trans-neurosporene as the major product, via the intermediary of phytofluene and zeta-carotene, by the introduction of three double bonds. This Cereibacter sphaeroides (strain ATCC 17023 / DSM 158 / JCM 6121 / CCUG 31486 / LMG 2827 / NBRC 12203 / NCIMB 8253 / ATH 2.4.1.) (Rhodobacter sphaeroides) protein is Phytoene desaturase (neurosporene-forming) (crtI).